Here is a 75-residue protein sequence, read N- to C-terminus: MYB-like transcription factor ETC3 (75 aa).

The segment at 1 to 20 (MDNHRRTKQPKTNSIVTSSS) is disordered. One can recognise a Myb-like domain in the interval 34–71 (SQEEEDLVSRMHKLVGDRWELIAGRIPGRTAGEIERFW).

In terms of tissue distribution, expressed in leaf epidermal cells, stomate guard cells in leaves, cotyledons and hypocotyls, inflorescences, developing seeds and siliques.

The protein localises to the nucleus. Functionally, MYB-type transcription factor involved in epidermal cell fate specification. Acts as a negative regulator of trichome development, including endoreplication, by mediating lateral inhibition. Promotes the formation of hair developing cells in H position in root epidermis, probably by inhibiting non-hair cell formation. May have pleiotropic effects on flowering development and epidermal cell size through the regulation of endoreduplication. The protein is MYB-like transcription factor ETC3 (ETC3) of Arabidopsis thaliana (Mouse-ear cress).